The chain runs to 344 residues: Ras association domain-containing protein 1 (344 aa).

Ser2 bears the N-acetylserine mark. Phosphoserine is present on Ser2. The interval 2 to 119 (SGEPELIELR…DLGWEPAVER (118 aa)) is mediates interaction with E4F1. Arg36 carries the post-translational modification Omega-N-methylarginine. The Phorbol-ester/DAG-type zinc finger occupies 51–105 (GHRFQPAGPATHTWCDLCGDFIWGVVRKGLQCARLSADCKFTCHYRCRALVCLDC). Residues 179 to 189 (SVPSSKKPPSL) are compositionally biased toward low complexity. Residues 179-203 (SVPSSKKPPSLQDARRGPGRGTSVR) are disordered. Residues 198 to 292 (RGTSVRRRTS…LSFVLKENDS (95 aa)) enclose the Ras-associating domain. An SARAH domain is found at 294–341 (EVNWDAFSMPELHNFLRILQREEEEHLRQILQKYSYCRQKIQEALHAC). Residues 315–318 (EEEE) are MOAP1-binding.

Interacts with MAP1S. Interacts with XPA. Binds to the N-terminal of CDC20 during prometaphase. Binds to STK3/MST2 and STK4/MST1. Recruited to the TNFRSF1A and TNFRSF10A complexes in response to their respective cognate ligand, after internalization. Can self-associate. Part of a complex with MDM2, DAXX, RASSF1 and USP7. Interacts with ECM2. As to quaternary structure, interacts with MOAP1. Interacts with E4F1. Interacts with RSSF5 and probably associates with HRAS via a RSSF1 isoform A-RSSF5 heterodimer. Interacts (via C-terminus) with DAXX (via N-terminus); the interaction is independent of MDM2 and TP53. Interacts (via N-terminus) with MDM2 (via C-terminus); the interaction is independent of TP53. Interacts with RAB39A. Interacts with RAB39B; the interaction is weak. In terms of assembly, interacts (via N-terminus) with DAXX. Interacts with RAB39B; the interaction is strong. Does not interact with RAB39A. Interacts (via N-terminus) with DAXX. Isoform A and isoform C are ubiquitously expressed in all tissues tested, however isoform A is absent in many corresponding cancer cell lines. Isoform B is mainly expressed in hematopoietic cells.

Its subcellular location is the cytoplasm. The protein localises to the cytoskeleton. It localises to the microtubule organizing center. The protein resides in the centrosome. It is found in the spindle. Its subcellular location is the spindle pole. The protein localises to the nucleus. In terms of biological role, potential tumor suppressor. Required for death receptor-dependent apoptosis. Mediates activation of STK3/MST2 and STK4/MST1 during Fas-induced apoptosis by preventing their dephosphorylation. When associated with MOAP1, promotes BAX conformational change and translocation to mitochondrial membranes in response to TNF and TNFSF10 stimulation. Isoform A interacts with CDC20, an activator of the anaphase-promoting complex, APC, resulting in the inhibition of APC activity and mitotic progression. Inhibits proliferation by negatively regulating cell cycle progression at the level of G1/S-phase transition by regulating accumulation of cyclin D1 protein. Isoform C has been shown not to perform these roles, no function has been identified for this isoform. Isoform A disrupts interactions among MDM2, DAXX and USP7, thus contributing to the efficient activation of TP53 by promoting MDM2 self-ubiquitination in cell-cycle checkpoint control in response to DNA damage. In Homo sapiens (Human), this protein is Ras association domain-containing protein 1.